The primary structure comprises 156 residues: ATP synthase subunit b (156 aa).

Residues 7-29 (LLGQAISFLLFVWFCMKFVWPPL) traverse the membrane as a helical segment.

The protein belongs to the ATPase B chain family. F-type ATPases have 2 components, F(1) - the catalytic core - and F(0) - the membrane proton channel. F(1) has five subunits: alpha(3), beta(3), gamma(1), delta(1), epsilon(1). F(0) has three main subunits: a(1), b(2) and c(10-14). The alpha and beta chains form an alternating ring which encloses part of the gamma chain. F(1) is attached to F(0) by a central stalk formed by the gamma and epsilon chains, while a peripheral stalk is formed by the delta and b chains.

It localises to the cell inner membrane. Functionally, f(1)F(0) ATP synthase produces ATP from ADP in the presence of a proton or sodium gradient. F-type ATPases consist of two structural domains, F(1) containing the extramembraneous catalytic core and F(0) containing the membrane proton channel, linked together by a central stalk and a peripheral stalk. During catalysis, ATP synthesis in the catalytic domain of F(1) is coupled via a rotary mechanism of the central stalk subunits to proton translocation. In terms of biological role, component of the F(0) channel, it forms part of the peripheral stalk, linking F(1) to F(0). The polypeptide is ATP synthase subunit b (Shewanella pealeana (strain ATCC 700345 / ANG-SQ1)).